The sequence spans 348 residues: MTAETAAVDARPVASSQRVGVLLVNLGTPDALGYWPVRRYLKEFLSDRRVVNTPRLIWWPILNLIILTTRPQRSSKNYETIWNSQRNESPLKTVTRSQAEQLAGSIVSGEFGAGGDIVVDWAMRYANPSILSSLQRLREQGCGRVLIVPLYPQFAGATTLSVADKVEESLARMNWRPDMRSVPPYYNDPVYIDALAQSVRAGLAALDFEPEVVLVSFHGIPKSYVEAGDPYYDQCVETWRLLRERLDFSPERCPLTFQSRFGRAEWLSPYTDETVKELARKGVRRMAVLTPGFSVDCLETISEIGVENREFFIEAGGEQFALIPCLNDSALGMKVIRHIVSRELEGWI.

His-218 and Glu-299 together coordinate Fe cation.

Belongs to the ferrochelatase family.

It is found in the cytoplasm. The enzyme catalyses heme b + 2 H(+) = protoporphyrin IX + Fe(2+). Its pathway is porphyrin-containing compound metabolism; protoheme biosynthesis; protoheme from protoporphyrin-IX: step 1/1. Functionally, catalyzes the ferrous insertion into protoporphyrin IX. In Methylocella silvestris (strain DSM 15510 / CIP 108128 / LMG 27833 / NCIMB 13906 / BL2), this protein is Ferrochelatase.